The following is a 306-amino-acid chain: Pantothenate kinase (306 aa).

Position 91–98 (91–98 (GSVAVGKS)) interacts with ATP.

It belongs to the prokaryotic pantothenate kinase family.

It localises to the cytoplasm. It catalyses the reaction (R)-pantothenate + ATP = (R)-4'-phosphopantothenate + ADP + H(+). It functions in the pathway cofactor biosynthesis; coenzyme A biosynthesis; CoA from (R)-pantothenate: step 1/5. The chain is Pantothenate kinase from Streptococcus pyogenes serotype M12 (strain MGAS2096).